We begin with the raw amino-acid sequence, 1436 residues long: ABC transporter C family member 15 (1436 aa).

The next 7 helical transmembrane spans lie at 8-28 (IINK…IYLY), 129-149 (YIAT…PLIL), 165-185 (IYIG…NMAS), 238-258 (FFQY…IQIL), 261-281 (LGFL…VMLI), 349-369 (IIYW…VLVS), and 373-393 (TYTL…ITIL). The ABC transmembrane type-1 1 domain occupies 128-412 (NYIATGLFVF…LPDCLHKFIS (285 aa)). The 224-residue stretch at 543-766 (ADYQDLLSIN…IDFEMILKEK (224 aa)) folds into the ABC transporter 1 domain. An ATP-binding site is contributed by 575-582 (GGVRSGKT). Residues 865 to 1155 (KKYIRMGSSI…FMRQFGELES (291 aa)) enclose the ABC transmembrane type-1 2 domain. 6 helical membrane passes run 873 to 893 (SISF…ILLL), 919 to 939 (LIYL…YLLI), 985 to 1005 (IDIL…CLVT), 1017 to 1039 (IAIP…NYSV), 1101 to 1121 (IGIR…LFSI), and 1127 to 1147 (GLSA…NWFM). The 234-residue stretch at 1193-1426 (IEFKNVEIRY…STSRFSKLIK (234 aa)) folds into the ABC transporter 2 domain. Position 1227 to 1234 (1227 to 1234 (GRSGSGKS)) interacts with ATP.

It belongs to the ABC transporter superfamily. ABCC family. Conjugate transporter (TC 3.A.1.208) subfamily.

The protein localises to the membrane. In Dictyostelium discoideum (Social amoeba), this protein is ABC transporter C family member 15 (abcC15).